A 419-amino-acid polypeptide reads, in one-letter code: ATP-dependent RNA helicase RhlB (419 aa).

The short motif at 9-37 (QRFSDLALHRSVQQAIKEKGFEFCTPIQA) is the Q motif element. The Helicase ATP-binding domain occupies 40-217 (LPITLKGQDI…FEHMNDPQYV (178 aa)). 53–60 (AQTGTGKT) is a binding site for ATP. Positions 163–166 (DEAD) match the DEAD box motif. The Helicase C-terminal domain occupies 241–388 (KMALLMTLLE…VSQYDAKALI (148 aa)).

It belongs to the DEAD box helicase family. RhlB subfamily. In terms of assembly, component of the RNA degradosome, which is a multiprotein complex involved in RNA processing and mRNA degradation.

It localises to the cytoplasm. The catalysed reaction is ATP + H2O = ADP + phosphate + H(+). In terms of biological role, DEAD-box RNA helicase involved in RNA degradation. Has RNA-dependent ATPase activity and unwinds double-stranded RNA. The protein is ATP-dependent RNA helicase RhlB of Histophilus somni (strain 129Pt) (Haemophilus somnus).